The chain runs to 334 residues: Holliday junction branch migration complex subunit RuvB (334 aa).

Residues 4 to 184 (ADRIISASPK…FGIVQRLEFY (181 aa)) form a large ATPase domain (RuvB-L) region. Residues Ile-23, Arg-24, Gly-65, Lys-68, Thr-69, Thr-70, 131–133 (EDY), Arg-174, Tyr-184, and Arg-221 each bind ATP. Thr-69 contributes to the Mg(2+) binding site. The interval 185–255 (SVDDLTSIVK…IAKQALAMLD (71 aa)) is small ATPAse domain (RuvB-S). Residues 258–334 (SEGFDFMDIK…YAHLGIAKLD (77 aa)) are head domain (RuvB-H). The DNA site is built by Arg-294, Arg-313, and Arg-318.

It belongs to the RuvB family. Homohexamer. Forms an RuvA(8)-RuvB(12)-Holliday junction (HJ) complex. HJ DNA is sandwiched between 2 RuvA tetramers; dsDNA enters through RuvA and exits via RuvB. An RuvB hexamer assembles on each DNA strand where it exits the tetramer. Each RuvB hexamer is contacted by two RuvA subunits (via domain III) on 2 adjacent RuvB subunits; this complex drives branch migration. In the full resolvosome a probable DNA-RuvA(4)-RuvB(12)-RuvC(2) complex forms which resolves the HJ.

The protein localises to the cytoplasm. The catalysed reaction is ATP + H2O = ADP + phosphate + H(+). Its function is as follows. The RuvA-RuvB-RuvC complex processes Holliday junction (HJ) DNA during genetic recombination and DNA repair, while the RuvA-RuvB complex plays an important role in the rescue of blocked DNA replication forks via replication fork reversal (RFR). RuvA specifically binds to HJ cruciform DNA, conferring on it an open structure. The RuvB hexamer acts as an ATP-dependent pump, pulling dsDNA into and through the RuvAB complex. RuvB forms 2 homohexamers on either side of HJ DNA bound by 1 or 2 RuvA tetramers; 4 subunits per hexamer contact DNA at a time. Coordinated motions by a converter formed by DNA-disengaged RuvB subunits stimulates ATP hydrolysis and nucleotide exchange. Immobilization of the converter enables RuvB to convert the ATP-contained energy into a lever motion, pulling 2 nucleotides of DNA out of the RuvA tetramer per ATP hydrolyzed, thus driving DNA branch migration. The RuvB motors rotate together with the DNA substrate, which together with the progressing nucleotide cycle form the mechanistic basis for DNA recombination by continuous HJ branch migration. Branch migration allows RuvC to scan DNA until it finds its consensus sequence, where it cleaves and resolves cruciform DNA. The chain is Holliday junction branch migration complex subunit RuvB from Actinobacillus pleuropneumoniae serotype 5b (strain L20).